The sequence spans 264 residues: MGRIDNTFAKLAKNKKKALVTFITAGDPDLETTESLIIDLEKAGADLIELGVPFSDPMADGPTIQLSSERALAAGTTLPKILATVKSVRRKTQIPIILMGYYNPIFLHGVERFVSDAVAAGVDGVLLVDLPPEEAGEFKAIADRSGLAVIFLLTPTSDEERIRKVAHLGSGFIYYVSVTGVTGARSSVAENVFSDVQKIRKRVTLPVVVGFGISDPAQAGSIASVADGVVVGSALVRQFEQFSGKELHTKLSTMVSALKAGIAA.

Active-site proton acceptor residues include Glu49 and Asp60.

It belongs to the TrpA family. Tetramer of two alpha and two beta chains.

It carries out the reaction (1S,2R)-1-C-(indol-3-yl)glycerol 3-phosphate + L-serine = D-glyceraldehyde 3-phosphate + L-tryptophan + H2O. The protein operates within amino-acid biosynthesis; L-tryptophan biosynthesis; L-tryptophan from chorismate: step 5/5. The alpha subunit is responsible for the aldol cleavage of indoleglycerol phosphate to indole and glyceraldehyde 3-phosphate. This is Tryptophan synthase alpha chain from Geotalea daltonii (strain DSM 22248 / JCM 15807 / FRC-32) (Geobacter daltonii).